The chain runs to 964 residues: Translation initiation factor IF-2 (964 aa).

A disordered region spans residues 26-375 (AAGVSKRSPE…QNNQHAFQAP (350 aa)). Composition is skewed to basic and acidic residues over residues 49–60 (YLKRSHGAREDS), 91–103 (VRPDDAPRAEAPK), 118–154 (AKPEPKPEPKVEAKPEPKPEPKPEPKVEAKPEPKPEP), 174–206 (IAAREAEEKRQAAFRARQEALMREKIEREERRQ), 225–236 (PQREERRDDRRG), 243–252 (RGPRGNDNRG), and 328–339 (KGGERSWDDNKK). Residues 464–633 (PRSPVVTVMG…LLQAEVLELK (170 aa)) form the tr-type G domain. A G1 region spans residues 473–480 (GHVDHGKT). A GTP-binding site is contributed by 473 to 480 (GHVDHGKT). Residues 498–502 (GITQH) are G2. Residues 519–522 (DTPG) are G3. GTP contacts are provided by residues 519-523 (DTPGH) and 573-576 (NKID). Residues 573–576 (NKID) are G4. Positions 609 to 611 (SAK) are G5.

It belongs to the TRAFAC class translation factor GTPase superfamily. Classic translation factor GTPase family. IF-2 subfamily.

The protein localises to the cytoplasm. Functionally, one of the essential components for the initiation of protein synthesis. Protects formylmethionyl-tRNA from spontaneous hydrolysis and promotes its binding to the 30S ribosomal subunits. Also involved in the hydrolysis of GTP during the formation of the 70S ribosomal complex. This chain is Translation initiation factor IF-2, found in Chromobacterium violaceum (strain ATCC 12472 / DSM 30191 / JCM 1249 / CCUG 213 / NBRC 12614 / NCIMB 9131 / NCTC 9757 / MK).